The following is a 248-amino-acid chain: Sugar fermentation stimulation protein homolog (248 aa).

It belongs to the SfsA family.

This is Sugar fermentation stimulation protein homolog from Methylorubrum extorquens (strain CM4 / NCIMB 13688) (Methylobacterium extorquens).